A 161-amino-acid chain; its full sequence is Large ribosomal subunit protein uL23m (161 aa).

A mitochondrion-targeting transit peptide spans 1–34; sequence MSKIAGKRLVYFPNITFTLCRGLNLQPKFAVFRV.

It belongs to the universal ribosomal protein uL23 family. In terms of assembly, component of the mitochondrial large ribosomal subunit (mt-LSU). Mature yeast 74S mitochondrial ribosomes consist of a small (37S) and a large (54S) subunit. The 37S small subunit contains a 15S ribosomal RNA (15S mt-rRNA) and at least 32 different proteins. The 54S large subunit contains a 21S rRNA (21S mt-rRNA) and at least 45 different proteins. uL23m forms the wall of the exit tunnel. Interacts with the C-terminus of OXA1.

The protein resides in the mitochondrion. Its function is as follows. Component of the mitochondrial ribosome (mitoribosome), a dedicated translation machinery responsible for the synthesis of mitochondrial genome-encoded proteins, including at least some of the essential transmembrane subunits of the mitochondrial respiratory chain. The mitoribosomes are attached to the mitochondrial inner membrane and translation products are cotranslationally integrated into the membrane. This chain is Large ribosomal subunit protein uL23m (mrp20), found in Schizosaccharomyces pombe (strain 972 / ATCC 24843) (Fission yeast).